An 809-amino-acid polypeptide reads, in one-letter code: Chorion peroxidase (809 aa).

The first 21 residues, 1-21 (MSRILFILLLLIVTQLSELQA), serve as a signal peptide directing secretion. The propeptide occupies 22 to 223 (AAFSVRQNRF…KFTETPLAHH (202 aa)). The segment at 36–55 (DLQTPAPLATSTESSKKPEK) is disordered. A glycan (N-linked (GlcNAc...) asparagine) is linked at Asn-110. Cys-224 carries the N-acetylcysteine; in Chorion peroxidase light chain modification. Cys-230 and Cys-244 are disulfide-bonded. The active-site Proton acceptor is the His-320. Cys-448 and Cys-457 form a disulfide bridge. A heme b-binding site is contributed by His-568. The cysteines at positions 765 and 794 are disulfide-linked.

The protein belongs to the peroxidase family. XPO subfamily. In terms of assembly, heterodimer. It depends on heme b as a cofactor. As to expression, expressed at low levels in the germarium and early follicles. Expression becomes progressively stronger during vitellogenesis, and is highly expressed in germ cells and somatic cells. A subset of follicle cells, termed border cells (BC), exhibit a high level of expression.

The protein resides in the secreted. It catalyses the reaction 2 a phenolic donor + H2O2 = 2 a phenolic radical donor + 2 H2O. Functionally, required for ovarian follicle maturation. Involved in the formation of a rigid and insoluble egg chorion by catalyzing chorion protein cross-linking through dityrosine formation and phenol oxidase-catalyzed chorion melanization. This is Chorion peroxidase (Pxt) from Drosophila melanogaster (Fruit fly).